The following is a 277-amino-acid chain: Phosphoribosylaminoimidazole-succinocarboxamide synthase (277 aa).

This sequence belongs to the SAICAR synthetase family.

It carries out the reaction 5-amino-1-(5-phospho-D-ribosyl)imidazole-4-carboxylate + L-aspartate + ATP = (2S)-2-[5-amino-1-(5-phospho-beta-D-ribosyl)imidazole-4-carboxamido]succinate + ADP + phosphate + 2 H(+). The protein operates within purine metabolism; IMP biosynthesis via de novo pathway; 5-amino-1-(5-phospho-D-ribosyl)imidazole-4-carboxamide from 5-amino-1-(5-phospho-D-ribosyl)imidazole-4-carboxylate: step 1/2. This is Phosphoribosylaminoimidazole-succinocarboxamide synthase from Salinispora arenicola (strain CNS-205).